The following is a 288-amino-acid chain: 4-hydroxybenzoate octaprenyltransferase (288 aa).

Helical transmembrane passes span 23–43 (IGSL…GRGI), 46–66 (AKIL…GCVV), 98–118 (ILFV…NSMT), 141–161 (LPQV…FAAV), 163–183 (ESLP…TVAY), 213–233 (LIIG…GWLM), 234–254 (NLGG…THQQ), and 268–288 (AFLN…ISYW).

It belongs to the UbiA prenyltransferase family. It depends on Mg(2+) as a cofactor.

It is found in the cell inner membrane. The catalysed reaction is all-trans-octaprenyl diphosphate + 4-hydroxybenzoate = 4-hydroxy-3-(all-trans-octaprenyl)benzoate + diphosphate. Its pathway is cofactor biosynthesis; ubiquinone biosynthesis. Catalyzes the prenylation of para-hydroxybenzoate (PHB) with an all-trans polyprenyl group. Mediates the second step in the final reaction sequence of ubiquinone-8 (UQ-8) biosynthesis, which is the condensation of the polyisoprenoid side chain with PHB, generating the first membrane-bound Q intermediate 3-octaprenyl-4-hydroxybenzoate. The sequence is that of 4-hydroxybenzoate octaprenyltransferase from Yersinia pseudotuberculosis serotype O:1b (strain IP 31758).